The primary structure comprises 274 residues: Putative phosphoenolpyruvate synthase regulatory protein (274 aa).

Residue 155–162 participates in ADP binding; that stretch reads GVSRSGKT.

It belongs to the pyruvate, phosphate/water dikinase regulatory protein family. PSRP subfamily.

The enzyme catalyses [pyruvate, water dikinase] + ADP = [pyruvate, water dikinase]-phosphate + AMP + H(+). It catalyses the reaction [pyruvate, water dikinase]-phosphate + phosphate + H(+) = [pyruvate, water dikinase] + diphosphate. Bifunctional serine/threonine kinase and phosphorylase involved in the regulation of the phosphoenolpyruvate synthase (PEPS) by catalyzing its phosphorylation/dephosphorylation. This chain is Putative phosphoenolpyruvate synthase regulatory protein, found in Laribacter hongkongensis (strain HLHK9).